We begin with the raw amino-acid sequence, 335 residues long: Histidinol-phosphate aminotransferase (335 aa).

Lys-202 is subject to N6-(pyridoxal phosphate)lysine.

The protein belongs to the class-II pyridoxal-phosphate-dependent aminotransferase family. Histidinol-phosphate aminotransferase subfamily. As to quaternary structure, homodimer. It depends on pyridoxal 5'-phosphate as a cofactor.

The enzyme catalyses L-histidinol phosphate + 2-oxoglutarate = 3-(imidazol-4-yl)-2-oxopropyl phosphate + L-glutamate. The protein operates within amino-acid biosynthesis; L-histidine biosynthesis; L-histidine from 5-phospho-alpha-D-ribose 1-diphosphate: step 7/9. The protein is Histidinol-phosphate aminotransferase of Thermotoga maritima (strain ATCC 43589 / DSM 3109 / JCM 10099 / NBRC 100826 / MSB8).